A 36-amino-acid polypeptide reads, in one-letter code: Pancreatic polypeptide (36 aa).

Tyr36 bears the Tyrosine amide mark.

This sequence belongs to the NPY family.

The protein localises to the secreted. Functionally, hormone secreted by pancreatic cells that acts as a regulator of pancreatic and gastrointestinal functions probably by signaling through the G protein-coupled receptor NPY4R2. In Didelphis virginiana (North American opossum), this protein is Pancreatic polypeptide (PPY).